Consider the following 1342-residue polypeptide: DNA-directed RNA polymerase subunit beta (1342 aa).

This sequence belongs to the RNA polymerase beta chain family. The RNAP catalytic core consists of 2 alpha, 1 beta, 1 beta' and 1 omega subunit. When a sigma factor is associated with the core the holoenzyme is formed, which can initiate transcription.

The catalysed reaction is RNA(n) + a ribonucleoside 5'-triphosphate = RNA(n+1) + diphosphate. In terms of biological role, DNA-dependent RNA polymerase catalyzes the transcription of DNA into RNA using the four ribonucleoside triphosphates as substrates. The chain is DNA-directed RNA polymerase subunit beta from Pseudoalteromonas atlantica (strain T6c / ATCC BAA-1087).